The sequence spans 224 residues: Ribonuclease HII (224 aa).

The region spanning 33–224 (FHVAGVDEVG…LKERYRNDVS (192 aa)) is the RNase H type-2 domain. Positions 39, 40, and 131 each coordinate a divalent metal cation.

This sequence belongs to the RNase HII family. It depends on Mn(2+) as a cofactor. Mg(2+) is required as a cofactor.

The protein localises to the cytoplasm. The enzyme catalyses Endonucleolytic cleavage to 5'-phosphomonoester.. In terms of biological role, endonuclease that specifically degrades the RNA of RNA-DNA hybrids. This Bartonella tribocorum (strain CIP 105476 / IBS 506) protein is Ribonuclease HII.